A 108-amino-acid polypeptide reads, in one-letter code: MNTNKIAQDEVQDKVLQRAELAHSVWNLRFNLSKVAKRIRMETKVFPEIKINDAQSQLERSRCRIFSPDLEEEHVPLIQGFKCLDSPPPVPPSSSQGEDEENTVDSQY.

The interval 81–108 (FKCLDSPPPVPPSSSQGEDEENTVDSQY) is disordered. The segment covering 97 to 108 (GEDEENTVDSQY) has biased composition (acidic residues).

This is an uncharacterized protein from Saccharomyces cerevisiae (strain ATCC 204508 / S288c) (Baker's yeast).